The following is a 995-amino-acid chain: KN motif and ankyrin repeat domain-containing protein 4 (995 aa).

Disordered stretches follow at residues 1–29 (MEKT…SVET) and 68–127 (TLPR…EVSY). Positions 101–124 (LGTQEQNQSPPLGNAPQASTSRSE) are enriched in polar residues. Positions 343–404 (SSLKQQVSAL…EGQFHQENAK (62 aa)) form a coiled coil. Disordered regions lie at residues 443 to 467 (ESWG…GNQS), 503 to 558 (EAGT…PTDA), 617 to 642 (QAHP…TSLK), 663 to 705 (LQFV…PDHK), and 721 to 740 (PEGT…VPHS). Gly residues predominate over residues 511–523 (GPQGGTRGAGGFL). The segment covering 526 to 549 (SDRKTPPAGREETSSNLPGKEHPG) has biased composition (basic and acidic residues). Positions 625 to 640 (PASSSSPPVEISPSTS) are enriched in low complexity. The span at 680–693 (TSGEDSTPEDLSDS) shows a compositional bias: acidic residues. A compositionally biased stretch (basic and acidic residues) spans 694–705 (EAEKKCDGPDHK). ANK repeat units lie at residues 823–853 (NGNT…NVDH), 862–890 (VMIT…NVNI), 895–924 (GGQT…DVNL), 928–958 (DGSS…DSSL), and 962–992 (AGRT…QGRS).

As to expression, strongly expressed in colon, liver, lung, skeletal muscle and kidney.

It is found in the cytoplasm. In terms of biological role, may be involved in the control of cytoskeleton formation by regulating actin polymerization. In Homo sapiens (Human), this protein is KN motif and ankyrin repeat domain-containing protein 4 (KANK4).